The following is a 51-amino-acid chain: Large ribosomal subunit protein eL39 (51 aa).

The interval 1–22 (MPSQKSFRTKQKLAKAQKQNRP) is disordered.

This sequence belongs to the eukaryotic ribosomal protein eL39 family. As to quaternary structure, interacts with YIH1.

In Debaryomyces hansenii (strain ATCC 36239 / CBS 767 / BCRC 21394 / JCM 1990 / NBRC 0083 / IGC 2968) (Yeast), this protein is Large ribosomal subunit protein eL39 (RPL39).